We begin with the raw amino-acid sequence, 1007 residues long: Tolloid-like protein 1 (1007 aa).

Positions 1-25 (MNMPSWLIFLLTGWTFCGNFFACGG) are cleaved as a signal peptide. Positions 26-142 (LDYDYPNYEN…GKSKKIRIPR (117 aa)) are excised as a propeptide. A disordered region spans residues 115-139 (SGQENTTANSQKVDNNQSGKSKKIR). Residues 116 to 133 (GQENTTANSQKVDNNQSG) are compositionally biased toward polar residues. The 200-residue stretch at 143-342 (AATSRTERIW…AQARKLYRCP (200 aa)) folds into the Peptidase M12A domain. A glycan (N-linked (GlcNAc...) asparagine) is linked at N164. Cystine bridges form between C185–C341, C205–C227, C207–C208, and C344–C370. Residue H235 participates in Zn(2+) binding. The active site involves E236. The Zn(2+) site is built by H239 and H245. CUB domains lie at 344 to 456 (CGET…YEAI) and 457 to 569 (CGGE…FLKE). N354 and N385 each carry an N-linked (GlcNAc...) asparagine glycan. 15 disulfide bridges follow: C397-C419, C457-C483, C510-C532, C573-C585, C581-C594, C596-C609, C613-C639, C666-C688, C729-C740, C736-C749, C751-C764, C769-C795, C822-C844, C882-C912, and C939-C961. The EGF-like 1; calcium-binding domain occupies 569-610 (EEDECARPDNGGCEQRCVNTLGSYKCSCDPGYELAPDKKSCE). Residues 613–725 (CGGLLTKLNG…KGFRAHFFSD (113 aa)) form the CUB 3 domain. An N-linked (GlcNAc...) asparagine glycan is attached at N621. In terms of domain architecture, EGF-like 2; calcium-binding spans 725 to 765 (DKDECSKDNGGCQHECINTIGSYVCQCRNGFVLHDNKHDCK). CUB domains lie at 769–881 (CEHR…HSTE) and 882–998 (CGGR…YRSV).

Zn(2+) serves as cofactor.

The protein resides in the secreted. Functionally, protease which processes procollagen C-propeptides, such as chordin. Required for the embryonic development. Predominant protease, which in the development, influences dorsal-ventral patterning and skeletogenesis. The protein is Tolloid-like protein 1 (tll1) of Xenopus laevis (African clawed frog).